Consider the following 467-residue polypeptide: Ethanolamine ammonia-lyase reactivase EutA (467 aa).

This sequence belongs to the EutA family.

Its subcellular location is the bacterial microcompartment. It participates in amine and polyamine degradation; ethanolamine degradation. Reactivates suicidally inhibited ethanolamine ammonia-lyase (EAL), cyanocobalamin-inactivated EAL and O(2)-inactivated EAL; requires Mg(2+), ATP and adenosylcobalamin. Reactivation probably occurs by the ATP-dependent exchange of cobalamin. Protects EAL from inhibition by CN-B12, does not have adenosylation activity. Functionally, expression of the eut operon allows this bacteria to use ethanolamine as a carbon, nitrogen and energy source. It relies on cobalamin (vitamin B12) both as a cofactor for the ethanolamine ammonia-lyase (EAL) activity and to induce the operon. EA enhances bacterial survival in macrophages in a concentration-dependent manner, suggesting it is an important nutrient during infection. This is Ethanolamine ammonia-lyase reactivase EutA from Salmonella typhimurium (strain LT2 / SGSC1412 / ATCC 700720).